Here is a 140-residue protein sequence, read N- to C-terminus: Large ribosomal subunit protein mL43 (140 aa).

It belongs to the mitochondrion-specific ribosomal protein mL43 family. In terms of assembly, component of the mitochondrial large ribosomal subunit (mt-LSU). Mature yeast 74S mitochondrial ribosomes consist of a small (37S) and a large (54S) subunit. The 37S small subunit contains a 15S ribosomal RNA (15S mt-rRNA) and 34 different proteins. The 54S large subunit contains a 21S rRNA (21S mt-rRNA) and 46 different proteins.

Its subcellular location is the mitochondrion. In terms of biological role, component of the mitochondrial ribosome (mitoribosome), a dedicated translation machinery responsible for the synthesis of mitochondrial genome-encoded proteins, including at least some of the essential transmembrane subunits of the mitochondrial respiratory chain. The mitoribosomes are attached to the mitochondrial inner membrane and translation products are cotranslationally integrated into the membrane. Also has an extraribosomal function, being essential for mitochondrial genome integrity. May interact with MHR1 to take part in the mtDNA repair mechanism. This is Large ribosomal subunit protein mL43 (MRPL51) from Saccharomyces cerevisiae (strain ATCC 204508 / S288c) (Baker's yeast).